Reading from the N-terminus, the 949-residue chain is Protein translocase subunit SecA 1 (949 aa).

ATP-binding positions include Q86, 104–108 (GEGKT), and D493. The disordered stretch occupies residues 869 to 949 (VDGGARERAP…AKPPKSVKKR (81 aa)). Residues 925-934 (SRRERREAAR) are compositionally biased toward basic and acidic residues.

Belongs to the SecA family. As to quaternary structure, monomer and homodimer. Part of the essential Sec protein translocation apparatus which comprises SecA, SecYEG and auxiliary proteins SecDF. Other proteins may also be involved.

It localises to the cell membrane. The protein resides in the cytoplasm. The catalysed reaction is ATP + H2O + cellular proteinSide 1 = ADP + phosphate + cellular proteinSide 2.. In terms of biological role, part of the Sec protein translocase complex. Interacts with the SecYEG preprotein conducting channel. Has a central role in coupling the hydrolysis of ATP to the transfer of proteins into and across the cell membrane, serving as an ATP-driven molecular motor driving the stepwise translocation of polypeptide chains across the membrane. The chain is Protein translocase subunit SecA 1 from Mycobacterium bovis (strain ATCC BAA-935 / AF2122/97).